The chain runs to 622 residues: Transcription factor SKN7 (622 aa).

Positions 1–12 (MSFSTINSNVNK) are enriched in polar residues. The tract at residues 1 to 29 (MSFSTINSNVNKTTGDSNNNTTENSSTAD) is disordered. Positions 13–27 (TTGDSNNNTTENSST) are enriched in low complexity. Positions 84 to 190 (ANEFVRKLFR…GLDNIKRKIP (107 aa)) are DNA-binding domain. Positions 212-303 (TNPNNPSGSL…NNFNTLCSTL (92 aa)) are hydrophobic repeat HR-A/B. Residues 240-260 (FGNLRRRVDKLQKELDMSKME) adopt a coiled-coil conformation. Residues 378 to 492 (HVLLVEDDAV…DLHSILIRYL (115 aa)) enclose the Response regulatory domain. At D427 the chain carries 4-aspartylphosphate. Disordered stretches follow at residues 501–579 (QQLP…QHHN) and 599–622 (TVPH…NQLS). Residues 512–527 (THSNTNTANSNPNTIN) are compositionally biased toward low complexity. Polar residues predominate over residues 537–554 (DNPSTTTPVTPGASISSA). Residues 555–578 (QHVQQGQQEQQHQIFHAQQQQQHH) are compositionally biased toward low complexity. Residues 600–622 (VPHSSMGSTPQLPQSTLQENQLS) show a composition bias toward polar residues.

This sequence belongs to the SKN7 family. Homotrimer. The phosphorelay mechanism involves the sequential transfer of a phosphate group from 'His-576' (H1) to 'Asp-1144' (D1) of SLN1, then to 'His-64' (H2) of YPD1 and finally to Asp-427 (D2) of SKN7.

Its subcellular location is the nucleus. Its function is as follows. Transcription factor that is part of a SLN1-YPD1-SKN7 two-component regulatory system, which controls gene expression in response to changes in the osmolarity of the extracellular environment. Under low osmotic conditions, phosphorylated and activated by the phosphorelay intermediate protein YPD1. Also activated in response to oxidative stress, independent on the two-component regulatory system. Regulates heat shock genes in response to oxidative stress and genes involved in cell wall integrity in response to osmotic changes. The polypeptide is Transcription factor SKN7 (SKN7) (Saccharomyces cerevisiae (strain ATCC 204508 / S288c) (Baker's yeast)).